A 1187-amino-acid chain; its full sequence is Protein CHROMATIN REMODELING 8 (1187 aa).

Residues 1 to 55 (MEEDEDQFLLSSLGVTSANPEDLEQKILDEATKKPDNDEGGSVEEKSTQLEGTNL) are disordered. Positions 9–19 (LLSSLGVTSAN) are enriched in polar residues. Residues 23 to 48 (LEQKILDEATKKPDNDEGGSVEEKST) show a composition bias toward basic and acidic residues. Positions 110-170 (LQHALATDRL…LKRKLKEIRK (61 aa)) form a coiled coil. Positions 162 to 169 (KRKLKEIR) match the Nuclear localization signal 1 motif. 2 disordered regions span residues 223–247 (GFER…DENE) and 273–343 (DAED…DGRR). Short sequence motifs (nuclear localization signal) lie at residues 290-297 (LRKLYKTP) and 310-317 (GKKSKKTR). Basic residues predominate over residues 305–328 (KKRKAGKKSKKTRPLPEKKWRKRI). Positions 397–594 (WELHCQRAGG…WSLFDFVFPG (198 aa)) constitute a Helicase ATP-binding domain. Residue 410 to 417 (DEMGLGKT) coordinates ATP. The disordered stretch occupies residues 467-501 (SAQDSGHGKGQGKASESDYDSESSVDSDHEPKSKN). Residues 492–501 (DSDHEPKSKN) are compositionally biased toward basic and acidic residues. The DEGH box signature appears at 545–548 (DEGH). Positions 730-890 (KVVAEVLKVW…RRFFKARDMK (161 aa)) constitute a Helicase C-terminal domain. Residues 987 to 1016 (NANDEEEKMRLEHQASQVAQRAAEALRQSR) are a coiled coil. Over residues 1050-1059 (VNSRLTQTGD) the composition is skewed to polar residues. Residues 1050–1075 (VNSRLTQTGDKPSAIKNGISAGLSSG) are disordered.

Belongs to the SNF2/RAD54 helicase family. In terms of assembly, homodimer. Binds DNA.

The protein localises to the nucleus. In terms of biological role, essential factor involved in transcription-coupled nucleotide excision repair (TCR) which allows RNA polymerase II-blocking lesions to be rapidly removed from the transcribed strand of active genes. Upon DNA-binding, it locally modifies DNA conformation by wrapping the DNA around itself, thereby modifying the interface between stalled RNA polymerase II and DNA. It is required for transcription-coupled repair complex formation. The polypeptide is Protein CHROMATIN REMODELING 8 (Arabidopsis thaliana (Mouse-ear cress)).